A 555-amino-acid chain; its full sequence is Pyrophosphate--fructose 6-phosphate 1-phosphotransferase (555 aa).

Glycine 82 contacts diphosphate. Arginine 146 provides a ligand contact to substrate. Aspartate 176 provides a ligand contact to Mg(2+). Residues 204–206 (TID), 243–244 (KY), 251–253 (MGR), glutamate 312, and 428–431 (YEGR) each bind substrate. Residue aspartate 206 is the Proton acceptor of the active site.

This sequence belongs to the phosphofructokinase type A (PFKA) family. PPi-dependent PFK group II subfamily. Clade 'Long' sub-subfamily. As to quaternary structure, homodimer. Requires Mg(2+) as cofactor.

It localises to the cytoplasm. The enzyme catalyses beta-D-fructose 6-phosphate + diphosphate = beta-D-fructose 1,6-bisphosphate + phosphate + H(+). It functions in the pathway carbohydrate degradation; glycolysis; D-glyceraldehyde 3-phosphate and glycerone phosphate from D-glucose: step 3/4. Non-allosteric. Catalyzes the phosphorylation of D-fructose 6-phosphate, the first committing step of glycolysis. Uses inorganic phosphate (PPi) as phosphoryl donor instead of ATP like common ATP-dependent phosphofructokinases (ATP-PFKs), which renders the reaction reversible, and can thus function both in glycolysis and gluconeogenesis. Consistently, PPi-PFK can replace the enzymes of both the forward (ATP-PFK) and reverse (fructose-bisphosphatase (FBPase)) reactions. The chain is Pyrophosphate--fructose 6-phosphate 1-phosphotransferase from Borreliella burgdorferi (strain ATCC 35210 / DSM 4680 / CIP 102532 / B31) (Borrelia burgdorferi).